A 37-amino-acid polypeptide reads, in one-letter code: Large ribosomal subunit protein bL36 (37 aa).

The protein belongs to the bacterial ribosomal protein bL36 family.

This Mycobacterium tuberculosis (strain ATCC 25618 / H37Rv) protein is Large ribosomal subunit protein bL36 (rpmJ).